We begin with the raw amino-acid sequence, 353 residues long: Photosystem II protein D1 (353 aa).

The residue at position 2 (Thr-2) is an N-acetylthreonine. Thr-2 is subject to Phosphothreonine. Helical transmembrane passes span 29 to 46 (YIGW…TATS), 118 to 133 (HFLL…EWEL), and 142 to 156 (WIAV…AATA). Residue His-118 participates in chlorophyll a binding. Residue Tyr-126 coordinates pheophytin a. Residues Asp-170 and Glu-189 each coordinate [CaMn4O5] cluster. Residues 197–218 (FHMLGVAGVFGGSLFSAMHGSL) traverse the membrane as a helical segment. His-198 is a chlorophyll a binding site. A quinone is bound by residues His-215 and 264 to 265 (SF). Residue His-215 coordinates Fe cation. His-272 lines the Fe cation pocket. The helical transmembrane segment at 274–288 (FLAAWPVVGIWFTAL) threads the bilayer. [CaMn4O5] cluster-binding residues include His-332, Glu-333, Asp-342, and Ala-344. The propeptide occupies 345–353 (AVEAPSTNG).

This sequence belongs to the reaction center PufL/M/PsbA/D family. PSII is composed of 1 copy each of membrane proteins PsbA, PsbB, PsbC, PsbD, PsbE, PsbF, PsbH, PsbI, PsbJ, PsbK, PsbL, PsbM, PsbT, PsbX, PsbY, PsbZ, Psb30/Ycf12, at least 3 peripheral proteins of the oxygen-evolving complex and a large number of cofactors. It forms dimeric complexes. It depends on The D1/D2 heterodimer binds P680, chlorophylls that are the primary electron donor of PSII, and subsequent electron acceptors. It shares a non-heme iron and each subunit binds pheophytin, quinone, additional chlorophylls, carotenoids and lipids. D1 provides most of the ligands for the Mn4-Ca-O5 cluster of the oxygen-evolving complex (OEC). There is also a Cl(-1) ion associated with D1 and D2, which is required for oxygen evolution. The PSII complex binds additional chlorophylls, carotenoids and specific lipids. as a cofactor. Post-translationally, tyr-161 forms a radical intermediate that is referred to as redox-active TyrZ, YZ or Y-Z. C-terminally processed by CTPA; processing is essential to allow assembly of the oxygen-evolving complex and thus photosynthetic growth.

The protein resides in the plastid. It localises to the chloroplast thylakoid membrane. It carries out the reaction 2 a plastoquinone + 4 hnu + 2 H2O = 2 a plastoquinol + O2. Functionally, photosystem II (PSII) is a light-driven water:plastoquinone oxidoreductase that uses light energy to abstract electrons from H(2)O, generating O(2) and a proton gradient subsequently used for ATP formation. It consists of a core antenna complex that captures photons, and an electron transfer chain that converts photonic excitation into a charge separation. The D1/D2 (PsbA/PsbD) reaction center heterodimer binds P680, the primary electron donor of PSII as well as several subsequent electron acceptors. The polypeptide is Photosystem II protein D1 (Drimys granadensis).